Here is a 101-residue protein sequence, read N- to C-terminus: MIHQINSINMEIILTDVARDALQEKIVSQLSILLRVYRDTNTSESVTLPLSGVNLQEVAARSFFNNESIPWFFHLFRPCQSGHEKKPLCPQALELVLSFSS.

The protein localises to the mitochondrion. This is an uncharacterized protein from Arabidopsis thaliana (Mouse-ear cress).